The chain runs to 61 residues: MAKKSMIAKNKRPAKHSTQAYTRCEKCGRPHSVSRKFKLCRVCFRELAYKGQIPGVVKASW.

Positions 24, 27, 40, and 43 each coordinate Zn(2+).

Belongs to the universal ribosomal protein uS14 family. Zinc-binding uS14 subfamily. As to quaternary structure, part of the 30S ribosomal subunit. Contacts proteins S3 and S10. Zn(2+) is required as a cofactor.

In terms of biological role, binds 16S rRNA, required for the assembly of 30S particles and may also be responsible for determining the conformation of the 16S rRNA at the A site. The chain is Small ribosomal subunit protein uS14 from Streptococcus pyogenes serotype M49 (strain NZ131).